Reading from the N-terminus, the 363-residue chain is 3-isopropylmalate dehydrogenase (363 aa).

An NAD(+)-binding site is contributed by G78–E91. 4 residues coordinate substrate: R99, R109, R138, and D227. 3 residues coordinate Mg(2+): D227, D251, and D255. Residue G285–N297 coordinates NAD(+).

Belongs to the isocitrate and isopropylmalate dehydrogenases family. LeuB type 1 subfamily. Homodimer. Requires Mg(2+) as cofactor. Mn(2+) serves as cofactor.

The protein resides in the cytoplasm. It carries out the reaction (2R,3S)-3-isopropylmalate + NAD(+) = 4-methyl-2-oxopentanoate + CO2 + NADH. It functions in the pathway amino-acid biosynthesis; L-leucine biosynthesis; L-leucine from 3-methyl-2-oxobutanoate: step 3/4. Catalyzes the oxidation of 3-carboxy-2-hydroxy-4-methylpentanoate (3-isopropylmalate) to 3-carboxy-4-methyl-2-oxopentanoate. The product decarboxylates to 4-methyl-2 oxopentanoate. The protein is 3-isopropylmalate dehydrogenase of Buchnera aphidicola subsp. Diuraphis noxia.